Here is a 273-residue protein sequence, read N- to C-terminus: MTLSNSALGKKSTYKDTYDPTLLFKIPRIDNRKELGIVNDKLPFHGVDIWNAYELSWLDKKGKPCVAIFTFFVPTTSSHIVESKSVKLYLNSFNNFVVDSMEELKRTILQDLSNNTHAEVTGEIFPINTKIEFGSPTGINIDDIDIECSEYGPPNNSLIKHEDVLVEEELNSNLLKSNCLVTGQPDWGTIIIKYKGKKLKHDALLKYLVSFRNCNEFAEQCAERIFTDIKNAINPEFLSIYIIYTRRGGIDICPYRSTDSNYTLPSSKRLIRQ.

81–83 is a substrate binding site; sequence VES. NADPH is bound at residue 83 to 84; the sequence is SK. Cysteine 179 (thioimide intermediate) is an active-site residue. Aspartate 186 serves as the catalytic Proton donor. 218–219 is a substrate binding site; sequence AE. 247 to 248 contacts NADPH; that stretch reads RG.

The protein belongs to the GTP cyclohydrolase I family. QueF type 2 subfamily. In terms of assembly, homodimer.

The protein localises to the cytoplasm. The enzyme catalyses 7-aminomethyl-7-carbaguanine + 2 NADP(+) = 7-cyano-7-deazaguanine + 2 NADPH + 3 H(+). The protein operates within tRNA modification; tRNA-queuosine biosynthesis. Its function is as follows. Catalyzes the NADPH-dependent reduction of 7-cyano-7-deazaguanine (preQ0) to 7-aminomethyl-7-deazaguanine (preQ1). The sequence is that of NADPH-dependent 7-cyano-7-deazaguanine reductase from Rickettsia bellii (strain OSU 85-389).